Here is a 178-residue protein sequence, read N- to C-terminus: Interleukin-10 (178 aa).

A signal peptide spans 1–18 (MHSSALLCCLVFLAGVAA). Intrachain disulfides connect Cys30–Cys126 and Cys80–Cys132. Residue Asn134 is glycosylated (N-linked (GlcNAc...) asparagine).

The protein belongs to the IL-10 family. Homodimer. Interacts with IL10RA and IL10RB.

It is found in the secreted. Functionally, major immune regulatory cytokine that acts on many cells of the immune system where it has profound anti-inflammatory functions, limiting excessive tissue disruption caused by inflammation. Mechanistically, IL10 binds to its heterotetrameric receptor comprising IL10RA and IL10RB leading to JAK1 and STAT2-mediated phosphorylation of STAT3. In turn, STAT3 translocates to the nucleus where it drives expression of anti-inflammatory mediators. Targets antigen-presenting cells (APCs) such as macrophages and monocytes and inhibits their release of pro-inflammatory cytokines including granulocyte-macrophage colony-stimulating factor /GM-CSF, granulocyte colony-stimulating factor/G-CSF, IL-1 alpha, IL-1 beta, IL-6, IL-8 and TNF-alpha. Also interferes with antigen presentation by reducing the expression of MHC-class II and co-stimulatory molecules, thereby inhibiting their ability to induce T cell activation. In addition, controls the inflammatory response of macrophages by reprogramming essential metabolic pathways including mTOR signaling. The chain is Interleukin-10 (IL10) from Bos taurus (Bovine).